A 211-amino-acid polypeptide reads, in one-letter code: Protein-L-isoaspartate O-methyltransferase (211 aa).

The active site involves serine 60.

Belongs to the methyltransferase superfamily. L-isoaspartyl/D-aspartyl protein methyltransferase family.

It is found in the cytoplasm. It carries out the reaction [protein]-L-isoaspartate + S-adenosyl-L-methionine = [protein]-L-isoaspartate alpha-methyl ester + S-adenosyl-L-homocysteine. Functionally, catalyzes the methyl esterification of L-isoaspartyl residues in peptides and proteins that result from spontaneous decomposition of normal L-aspartyl and L-asparaginyl residues. It plays a role in the repair and/or degradation of damaged proteins. This Ectopseudomonas mendocina (strain ymp) (Pseudomonas mendocina) protein is Protein-L-isoaspartate O-methyltransferase.